A 335-amino-acid polypeptide reads, in one-letter code: Probable peptide ABC transporter ATP-binding protein y4tR (335 aa).

One can recognise an ABC transporter domain in the interval 15 to 264 (VRDLETHFYG…PTHPYTRALM (250 aa)). Residue 49–56 (GESGCGKS) coordinates ATP.

The protein belongs to the ABC transporter superfamily.

It is found in the cell inner membrane. In terms of biological role, probably part of a binding-protein-dependent transport system y4tOPQRS for a peptide. Probably responsible for energy coupling to the transport system. The chain is Probable peptide ABC transporter ATP-binding protein y4tR from Sinorhizobium fredii (strain NBRC 101917 / NGR234).